We begin with the raw amino-acid sequence, 623 residues long: uncharacterized protein (623 aa).

The next 5 helical transmembrane spans lie at 242 to 262 (IVLALTILALLLGLRKLITWL), 288 to 308 (IVSPVSVFLALFSCDVALDIF), 318 to 338 (VSMWVGAVYIMLLAWLVIALF), 361 to 381 (VINLILKVVYFLIFIVALLGV), and 387 to 407 (FNVSAIIASLGIGGLAVALAV).

Belongs to the MscS (TC 1.A.23) family.

It is found in the cell membrane. This is an uncharacterized protein from Helicobacter pylori (strain ATCC 700392 / 26695) (Campylobacter pylori).